Consider the following 403-residue polypeptide: Ribosomal RNA large subunit methyltransferase I (403 aa).

A PUA domain is found at 9-88 (YPRLVLSKGR…ESIDIAFFTR (80 aa)).

This sequence belongs to the methyltransferase superfamily. RlmI family.

The protein localises to the cytoplasm. The catalysed reaction is cytidine(1962) in 23S rRNA + S-adenosyl-L-methionine = 5-methylcytidine(1962) in 23S rRNA + S-adenosyl-L-homocysteine + H(+). Its function is as follows. Specifically methylates the cytosine at position 1962 (m5C1962) of 23S rRNA. The protein is Ribosomal RNA large subunit methyltransferase I of Salmonella agona (strain SL483).